We begin with the raw amino-acid sequence, 313 residues long: B3 domain-containing protein At2g31720 (313 aa).

The segment at 80 to 110 is disordered; that stretch reads KNQDPEQNPNRVASSPSSCHLESKRPQKVVS. Residues 84–99 show a composition bias toward polar residues; sequence PEQNPNRVASSPSSCH. The segment at residues 169–267 is a DNA-binding region (TF-B3); that stretch reads WKQILDMDFL…MLFFAFVLSD (99 aa).

It is found in the nucleus. The protein is B3 domain-containing protein At2g31720 (ARF70) of Arabidopsis thaliana (Mouse-ear cress).